The sequence spans 166 residues: Ribosome maturation factor RimM (166 aa).

The PRC barrel domain occupies 94 to 166 (EGEYYHADLI…IVIEAAYADQ (73 aa)).

This sequence belongs to the RimM family. As to quaternary structure, binds ribosomal protein uS19.

The protein resides in the cytoplasm. An accessory protein needed during the final step in the assembly of 30S ribosomal subunit, possibly for assembly of the head region. Essential for efficient processing of 16S rRNA. May be needed both before and after RbfA during the maturation of 16S rRNA. It has affinity for free ribosomal 30S subunits but not for 70S ribosomes. The chain is Ribosome maturation factor RimM from Novosphingobium aromaticivorans (strain ATCC 700278 / DSM 12444 / CCUG 56034 / CIP 105152 / NBRC 16084 / F199).